Reading from the N-terminus, the 81-residue chain is MTTTHDTNTKKLKYQFHTIHSQRIMTTVTQKPFTASPYIFSTTLRTTQTDGNNAINSHSHTQAGYNNSSERFLYLICTYIT.

This is an uncharacterized protein from Acidianus bottle-shaped virus (isolate Italy/Pozzuoli) (ABV).